We begin with the raw amino-acid sequence, 1299 residues long: Phosphoribosylformylglycinamidine synthase (1299 aa).

ATP-binding positions include 310 to 321 (GAATGAGGEIRD), 389 to 391 (TGY), and Ala680. Positions 681, 720, 724, and 888 each coordinate Mg(2+). Position 890 (Ser890) interacts with ATP. A Glutamine amidotransferase type-1 domain is found at 1046–1299 (VAVLREQGVN…MFRNARVWLG (254 aa)). Residue Cys1139 is the Nucleophile of the active site. Active-site residues include His1264 and Glu1266.

The protein in the N-terminal section; belongs to the FGAMS family. In terms of assembly, monomer.

It is found in the cytoplasm. The catalysed reaction is N(2)-formyl-N(1)-(5-phospho-beta-D-ribosyl)glycinamide + L-glutamine + ATP + H2O = 2-formamido-N(1)-(5-O-phospho-beta-D-ribosyl)acetamidine + L-glutamate + ADP + phosphate + H(+). The protein operates within purine metabolism; IMP biosynthesis via de novo pathway; 5-amino-1-(5-phospho-D-ribosyl)imidazole from N(2)-formyl-N(1)-(5-phospho-D-ribosyl)glycinamide: step 1/2. Its function is as follows. Phosphoribosylformylglycinamidine synthase involved in the purines biosynthetic pathway. Catalyzes the ATP-dependent conversion of formylglycinamide ribonucleotide (FGAR) and glutamine to yield formylglycinamidine ribonucleotide (FGAM) and glutamate. This is Phosphoribosylformylglycinamidine synthase from Myxococcus xanthus (strain DK1622).